Here is a 339-residue protein sequence, read N- to C-terminus: Annexin A2 (339 aa).

Ser-2 carries the post-translational modification N-acetylserine. The interval 2 to 24 (STVHEILCKLSLEGDHSTPPSAY) is S100A10-binding site. Tyr-24 is subject to Phosphotyrosine; by SRC. Ser-26 carries the post-translational modification Phosphoserine; by PKC. Annexin repeat units lie at residues 33–104 (FDAE…GLLK) and 105–176 (TPAQ…ALAK). An N6-acetyllysine; alternate modification is found at Lys-49. A Glycyl lysine isopeptide (Lys-Gly) (interchain with G-Cter in SUMO1); alternate cross-link involves residue Lys-49. Residue Lys-49 forms a Glycyl lysine isopeptide (Lys-Gly) (interchain with G-Cter in SUMO2); alternate linkage. Position 152 is an N6-acetyllysine (Lys-152). Ser-184 carries the phosphoserine modification. 2 Annexin repeats span residues 189–261 (ELID…NLVQ) and 265–336 (NKPL…YLCG). Tyr-199 carries the post-translational modification Phosphotyrosine. N6-acetyllysine is present on Lys-227.

The protein belongs to the annexin family. As to quaternary structure, heterotetramer containing 2 light chains of S100A10/p11 and 2 heavy chains of ANXA2/p36. Interacts with ATP1B1. Interacts with DYSF. Interacts with COCH. Interacts (via repeat Annexin 1) with PCSK9 (via the C-terminal domain); the interaction inhibits the degradation of LDLR. Interacts with CEACAM1 (via the cytoplasmic domain); this interaction is regulated by phosphorylation of CEACAM1. Interacts with APPL2 and APPL1; targets APPL2 to endosomes and acting in parallel to RAB5A. Interacts with S100A4. May interact with UBAP2. Interacts with PLEKHG4B; this interaction is required for PLEKHG4B localization to cell-cell adhesions. (Microbial infection) Interacts with human cytomegalovirus (HCMV). In terms of assembly, (Microbial infection) Interacts with M.pneumoniae CARDS toxin; CARDS probably uses this protein as a receptor. A portion of internalized CARDS remains associated with intracellular annexin 2. Post-translationally, phosphorylation of Tyr-24 enhances heat stress-induced translocation to the cell surface. In terms of processing, ISGylated.

Its subcellular location is the secreted. The protein resides in the extracellular space. It is found in the extracellular matrix. The protein localises to the basement membrane. It localises to the melanosome. Functionally, calcium-regulated membrane-binding protein whose affinity for calcium is greatly enhanced by anionic phospholipids. It binds two calcium ions with high affinity. May be involved in heat-stress response. Inhibits PCSK9-enhanced LDLR degradation, probably reduces PCSK9 protein levels via a translational mechanism but also competes with LDLR for binding with PCSK9. Binds to endosomes damaged by phagocytosis of particulate wear debris and participates in endosomal membrane stabilization, thereby limiting NLRP3 inflammasome activation. Required for endothelial cell surface plasmin generation and may support fibrinolytic surveillance and neoangiogenesis. In terms of biological role, (Microbial infection) Binds M.pneumoniae CARDS toxin, probably serves as one receptor for this pathogen. When ANXA2 is down-regulated by siRNA, less toxin binds to human cells and less vacuolization (a symptom of M.pneumoniae infection) is seen. In Homo sapiens (Human), this protein is Annexin A2 (ANXA2).